A 160-amino-acid chain; its full sequence is Ribosomal RNA large subunit methyltransferase H (160 aa).

Residues Leu-76, Gly-108, and 127–132 (FGFMTW) contribute to the S-adenosyl-L-methionine site.

Belongs to the RNA methyltransferase RlmH family. Homodimer.

The protein resides in the cytoplasm. The enzyme catalyses pseudouridine(1915) in 23S rRNA + S-adenosyl-L-methionine = N(3)-methylpseudouridine(1915) in 23S rRNA + S-adenosyl-L-homocysteine + H(+). In terms of biological role, specifically methylates the pseudouridine at position 1915 (m3Psi1915) in 23S rRNA. The protein is Ribosomal RNA large subunit methyltransferase H of Bartonella tribocorum (strain CIP 105476 / IBS 506).